The chain runs to 64 residues: Translation machinery-associated protein 7 homolog (64 aa).

Residues 1-64 are disordered; the sequence is MTGREGGKKK…TGGIKKSGKK (64 aa). A coiled-coil region spans residues 21–50; the sequence is EMDEEDMAFKQKQKEQQKAMEAAKQKAAKG. Over residues 27–44 the composition is skewed to basic and acidic residues; sequence MAFKQKQKEQQKAMEAAK.

This sequence belongs to the TMA7 family.

This chain is Translation machinery-associated protein 7 homolog, found in Aedes aegypti (Yellowfever mosquito).